A 307-amino-acid chain; its full sequence is MSIGCKLISGREVAESIIDQVKAHTVALSANGITPGLAVIIVGSDPASQVYVASKGRKAEECGFLSIKHELPHDVPERRLLELIDSLNADPSIHGILVQLPLPRHVDSGKVIQAISPQKDIDGFHFINVGKLGTGALETAFVPCTPAGCMILVERIHGKDLSGLSAVVVGRSNIVGKPMANLLLAANATVTIAHSRTANLEVLCRQADILIAAVGRPEMIRSDWIKPGATVIDVGINRIASRDDGGKTRLVGDVDFDGAVERAGAVTPVPGGVGPMTIAMLMANTLRAACHANDEPAPHFGSGGVLR.

NADP(+) contacts are provided by residues 170–172 (GRS), Ser-195, and Ile-236.

This sequence belongs to the tetrahydrofolate dehydrogenase/cyclohydrolase family. Homodimer.

It catalyses the reaction (6R)-5,10-methylene-5,6,7,8-tetrahydrofolate + NADP(+) = (6R)-5,10-methenyltetrahydrofolate + NADPH. It carries out the reaction (6R)-5,10-methenyltetrahydrofolate + H2O = (6R)-10-formyltetrahydrofolate + H(+). It functions in the pathway one-carbon metabolism; tetrahydrofolate interconversion. In terms of biological role, catalyzes the oxidation of 5,10-methylenetetrahydrofolate to 5,10-methenyltetrahydrofolate and then the hydrolysis of 5,10-methenyltetrahydrofolate to 10-formyltetrahydrofolate. The sequence is that of Bifunctional protein FolD from Sinorhizobium fredii (strain NBRC 101917 / NGR234).